A 67-amino-acid chain; its full sequence is DNA-directed RNA polymerase subunit omega (67 aa).

It belongs to the RNA polymerase subunit omega family. The RNAP catalytic core consists of 2 alpha, 1 beta, 1 beta' and 1 omega subunit. When a sigma factor is associated with the core the holoenzyme is formed, which can initiate transcription.

The catalysed reaction is RNA(n) + a ribonucleoside 5'-triphosphate = RNA(n+1) + diphosphate. Its function is as follows. Promotes RNA polymerase assembly. Latches the N- and C-terminal regions of the beta' subunit thereby facilitating its interaction with the beta and alpha subunits. The sequence is that of DNA-directed RNA polymerase subunit omega from Albidiferax ferrireducens (strain ATCC BAA-621 / DSM 15236 / T118) (Rhodoferax ferrireducens).